An 834-amino-acid polypeptide reads, in one-letter code: Ras GTPase-activating protein 3 (834 aa).

C2 domains follow at residues 1 to 112 (MAVE…DTWF) and 123 to 263 (VQGK…EAWY). The residue at position 2 (alanine 2) is an N-acetylalanine. At tyrosine 66 the chain carries Phosphotyrosine. Serine 77 is subject to Phosphoserine. Threonine 110 bears the Phosphothreonine mark. The 216-residue stretch at 346 to 561 (GRVVPFISAI…DAVKNFLDLI (216 aa)) folds into the Ras-GAP domain. The PH domain occupies 576–677 (ILLKEGFMIK…WIDILTKVSQ (102 aa)). A Btk-type zinc finger spans residues 679-715 (NQKRLAVYHPSAYLNGHWLCCRASSDTAAGCSPCTGG). Positions 687, 698, 699, and 709 each coordinate Zn(2+). Residues 806 to 834 (KYGSQEHPIGDKSFQSYIRQQSETPAHSM) are disordered. Residues serine 809 and serine 833 each carry the phosphoserine modification. A compositionally biased stretch (polar residues) spans 818-834 (SFQSYIRQQSETPAHSM).

Inhibitory regulator of the Ras-cyclic AMP pathway. May bind inositol tetrakisphosphate (IP4). The protein is Ras GTPase-activating protein 3 (RASA3) of Bos taurus (Bovine).